Here is a 213-residue protein sequence, read N- to C-terminus: Orotate phosphoribosyltransferase (213 aa).

Residue Lys-26 participates in 5-phospho-alpha-D-ribose 1-diphosphate binding. 34 to 35 (FF) lines the orotate pocket. 5-phospho-alpha-D-ribose 1-diphosphate is bound by residues 72 to 73 (YK), Arg-98, Lys-99, Lys-102, and 123 to 131 (DDVISAGTS). Residues Ser-127 and Arg-155 each coordinate orotate.

This sequence belongs to the purine/pyrimidine phosphoribosyltransferase family. PyrE subfamily. Homodimer. Mg(2+) serves as cofactor.

It catalyses the reaction orotidine 5'-phosphate + diphosphate = orotate + 5-phospho-alpha-D-ribose 1-diphosphate. The protein operates within pyrimidine metabolism; UMP biosynthesis via de novo pathway; UMP from orotate: step 1/2. In terms of biological role, catalyzes the transfer of a ribosyl phosphate group from 5-phosphoribose 1-diphosphate to orotate, leading to the formation of orotidine monophosphate (OMP). The polypeptide is Orotate phosphoribosyltransferase (Neisseria gonorrhoeae (strain NCCP11945)).